The chain runs to 127 residues: Large ribosomal subunit protein bL12 (127 aa).

It belongs to the bacterial ribosomal protein bL12 family. Homodimer. Part of the ribosomal stalk of the 50S ribosomal subunit. Forms a multimeric L10(L12)X complex, where L10 forms an elongated spine to which 2 to 4 L12 dimers bind in a sequential fashion. Binds GTP-bound translation factors.

Its function is as follows. Forms part of the ribosomal stalk which helps the ribosome interact with GTP-bound translation factors. Is thus essential for accurate translation. The sequence is that of Large ribosomal subunit protein bL12 from Rhizobium etli (strain ATCC 51251 / DSM 11541 / JCM 21823 / NBRC 15573 / CFN 42).